A 259-amino-acid polypeptide reads, in one-letter code: Exotoxin A regulatory protein (259 aa).

Its subcellular location is the cell inner membrane. Its function is as follows. Positive regulation of toxA gene transcription. The polypeptide is Exotoxin A regulatory protein (toxR) (Pseudomonas aeruginosa (strain ATCC 15692 / DSM 22644 / CIP 104116 / JCM 14847 / LMG 12228 / 1C / PRS 101 / PAO1)).